A 220-amino-acid chain; its full sequence is MTKGILGRKIGMTQVFGENGELIPVTVVEAKENVVLQKKTVEVDGYNAIQVGFEDKKAYKKDAKSNKYANKPAEGHAKKADAAPKRFIREFRNVDVDAYEVGQEVSVDTFVAGDVIDVTGVSKGKGFQGAIKRHGQSRGPMSHGSHFHRAPGSVGMASDASRVFKGQKMPGRMGGNTVTVQNLEVVQVDTENKVILVKGNVPGPKKGLVEIRTSIKKGNK.

A disordered region spans residues 130-156 (AIKRHGQSRGPMSHGSHFHRAPGSVGM).

The protein belongs to the universal ribosomal protein uL3 family. As to quaternary structure, part of the 50S ribosomal subunit. Forms a cluster with proteins L14 and L19.

One of the primary rRNA binding proteins, it binds directly near the 3'-end of the 23S rRNA, where it nucleates assembly of the 50S subunit. The sequence is that of Large ribosomal subunit protein uL3 from Staphylococcus aureus (strain Mu3 / ATCC 700698).